We begin with the raw amino-acid sequence, 271 residues long: Putative phosphoenolpyruvate synthase regulatory protein (271 aa).

152–159 (GASRSGKT) serves as a coordination point for ADP.

It belongs to the pyruvate, phosphate/water dikinase regulatory protein family. PSRP subfamily.

The catalysed reaction is [pyruvate, water dikinase] + ADP = [pyruvate, water dikinase]-phosphate + AMP + H(+). The enzyme catalyses [pyruvate, water dikinase]-phosphate + phosphate + H(+) = [pyruvate, water dikinase] + diphosphate. In terms of biological role, bifunctional serine/threonine kinase and phosphorylase involved in the regulation of the phosphoenolpyruvate synthase (PEPS) by catalyzing its phosphorylation/dephosphorylation. The polypeptide is Putative phosphoenolpyruvate synthase regulatory protein (Marinobacter nauticus (strain ATCC 700491 / DSM 11845 / VT8) (Marinobacter aquaeolei)).